The sequence spans 351 residues: Pinopsin (351 aa).

Topologically, residues 1-30 (MSSNSSQAPPNGTPGPFDGPQWPYQAPQST) are extracellular. N-linked (GlcNAc...) asparagine glycosylation is present at N4. Residues 31-55 (YVGVAVLMGTVVACASVVNGLVIVV) form a helical membrane-spanning segment. The Cytoplasmic portion of the chain corresponds to 56–67 (SICYKKLRSPLN). A helical membrane pass occupies residues 68–92 (YILVNLAVADLLVTLCGSSVSLSNN). Residues 93 to 107 (INGFFVFGRRMCELE) are Extracellular-facing. C104 and C181 form a disulfide bridge. The chain crosses the membrane as a helical span at residues 108–127 (GFMVSLTGIVGLWSLAILAL). Topologically, residues 128 to 146 (ERYVVVCKPLGDFQFQRRH) are cytoplasmic. Residues 147–170 (AVSGCAFTWGWALLWSAPPLLGWS) form a helical membrane-spanning segment. At 171–194 (SYVPEGLRTSCGPNWYTGGSNNNS) the chain is on the extracellular side. N-linked (GlcNAc...) asparagine glycosylation is present at N192. Residues 195–222 (YILSLFVTCFVLPLSLILFSYTNLLLTL) form a helical membrane-spanning segment. Residues 223-244 (RAAAAQQKEADTTQRAEREVTR) lie on the Cytoplasmic side of the membrane. The chain crosses the membrane as a helical span at residues 245-268 (MVIVMVMAFLLCWLPYSTFALVVA). Topologically, residues 269-276 (THKGIIIQ) are extracellular. The helical transmembrane segment at 277-301 (PVLASLPSYFSKTATVYNPIIYVFM) threads the bilayer. K288 carries the post-translational modification N6-(retinylidene)lysine. Over 302–351 (NKQFQSCLLEMLCCGYQPQRTGKASPGTPGPHADVTAAGLRNKVMPAHPV) the chain is Cytoplasmic. Residues C314 and C315 are each lipidated (S-palmitoyl cysteine).

The protein belongs to the G-protein coupled receptor 1 family. Opsin subfamily. Phosphorylated on some or all of the serine and threonine residues present in the C-terminal region. In terms of tissue distribution, pineal gland.

The protein resides in the membrane. Its function is as follows. Produces a slow and prolonged phototransduction response consistent with the non-visual function of pineal photoreception. This is Pinopsin from Gallus gallus (Chicken).